Here is a 286-residue protein sequence, read N- to C-terminus: Energy-coupling factor transporter ATP-binding protein EcfA2 (286 aa).

In terms of domain architecture, ABC transporter spans 3 to 246 (IQFNQVSYIY…KTQLLKWHIE (244 aa)). 40–47 (GQTGSGKS) is a binding site for ATP.

It belongs to the ABC transporter superfamily. Energy-coupling factor EcfA family. Forms a stable energy-coupling factor (ECF) transporter complex composed of 2 membrane-embedded substrate-binding proteins (S component), 2 ATP-binding proteins (A component) and 2 transmembrane proteins (T component).

The protein resides in the cell membrane. Its function is as follows. ATP-binding (A) component of a common energy-coupling factor (ECF) ABC-transporter complex. Unlike classic ABC transporters this ECF transporter provides the energy necessary to transport a number of different substrates. This is Energy-coupling factor transporter ATP-binding protein EcfA2 from Staphylococcus epidermidis (strain ATCC 35984 / DSM 28319 / BCRC 17069 / CCUG 31568 / BM 3577 / RP62A).